The following is a 264-amino-acid chain: MKFFLSLKDFKGEKFVLRSELDESSAFLCAISPTCRYVLRDEIPWKRLQRNVTSESLTDELIVDLLCGRSESKHTLQLVVLENLCRIYINYVDPFPLRIAWFELEQQALKDHEHFDVLWECSHSIKDLALASMAQQKNELQKLMAYTEQLQEECKSRERKLIMKFADMIKNARNNEDNEDNHHINYEDESDVGTDEQKQQEGVNSSAVSDTDESAVSDEFMQIKEEFPMKALSASPTADASPESAGEDDSHRRSSHESSETVSE.

A compositionally biased stretch (basic and acidic residues) spans 173–186 (RNNEDNEDNHHINY). The tract at residues 173–264 (RNNEDNEDNH…SHESSETVSE (92 aa)) is disordered. A compositionally biased stretch (polar residues) spans 200 to 209 (QEGVNSSAVS). Residues 248–264 (DDSHRRSSHESSETVSE) show a composition bias toward basic and acidic residues.

It belongs to the XRCC4-XLF family. XRCC4 subfamily. In terms of assembly, interacts with lig4; the interaction is direct.

The protein resides in the nucleus. In terms of biological role, involved in double-strand break repair via non-homologous end joining (NHEJ); the repair of a double-strand break in DNA in which the two broken ends are rejoined with little or no sequence complementarity. This Schizosaccharomyces pombe (strain 972 / ATCC 24843) (Fission yeast) protein is Non-homologous end-joining factor xrc4.